The chain runs to 206 residues: Large ribosomal subunit protein mL62 (206 aa).

A mitochondrion-targeting transit peptide spans 1–29 (MAATRCLRWGLSRAGVWLLPPPARCPRRA). An N5-methylglutamine modification is found at Gln-90.

The protein belongs to the prokaryotic/mitochondrial release factor family. Mitochondrion-specific ribosomal protein mL62 subfamily. As to quaternary structure, component of the mitochondrial large ribosomal subunit (mt-LSU). Mature mammalian 55S mitochondrial ribosomes consist of a small (28S) and a large (39S) subunit. The 28S small subunit contains a 12S ribosomal RNA (12S mt-rRNA) and 30 different proteins. The 39S large subunit contains a 16S rRNA (16S mt-rRNA), a copy of mitochondrial valine transfer RNA (mt-tRNA(Val)), which plays an integral structural role, and 52 different proteins. Post-translationally, methylation of glutamine in the GGQ triplet by HEMK1. Down-regulated during the in vitro differentiation of HT29-D4 colon carcinoma cells.

Its subcellular location is the mitochondrion. The enzyme catalyses an N-acyl-L-alpha-aminoacyl-tRNA + H2O = an N-acyl-L-amino acid + a tRNA + H(+). Essential peptidyl-tRNA hydrolase component of the mitochondrial large ribosomal subunit. Acts as a codon-independent translation release factor that has lost all stop codon specificity and directs the termination of translation in mitochondrion, possibly in case of abortive elongation. Involved in the hydrolysis of peptidyl-tRNAs that have been prematurely terminated and thus in the recycling of stalled mitochondrial ribosomes. The polypeptide is Large ribosomal subunit protein mL62 (Homo sapiens (Human)).